Here is a 510-residue protein sequence, read N- to C-terminus: Insulinoma-associated protein 1 (510 aa).

Over residues 1–12 the composition is skewed to basic residues; that stretch reads MPRGFLVKRSKK. The SNAG domain stretch occupies residues 1–20; it reads MPRGFLVKRSKKSTPVSYRV. Disordered stretches follow at residues 1–110 and 176–226; these read MPRG…SREH and GAEA…PKAI. The tract at residues 2 to 7 is required and sufficient for interaction with KDM1A; sequence PRGFLV. A necessary for interaction with CCND1 region spans residues 43–58; sequence PPAPSPVPGPLPPPPP. The span at 43–59 shows a compositional bias: pro residues; that stretch reads PPAPSPVPGPLPPPPPA. Low complexity-rich tracts occupy residues 64-74 and 209-218; these read AALAAALACAP and EPPAKAVKAP. The C2H2-type 1; atypical zinc-finger motif lies at 267 to 287; sequence FICQLCKEEYADPFALAQHKC. The C2H2-type 2 zinc finger occupies 295-317; that stretch reads YRCPECAKVFSCPANLASHRRWH. The interval 315-362 is disordered; it reads RWHKPRPAPAAARAPEPEAAARAEAREAPGGGSDRDTPSPGGVSESGS. Residues 329 to 351 show a composition bias toward basic and acidic residues; sequence PEPEAAARAEAREAPGGGSDRDT. C2H2-type zinc fingers lie at residues 367-389, 441-464, and 469-492; these read YECH…LLAH, HLCP…RLLH, and FPCK…NKCH.

The protein belongs to the INSM1 family. In terms of assembly, interacts (via the SNAG domain) with HDAC1. Interacts (via the SNAG domain) with HDAC2. Interacts (via the SNAG domain) with KDM1A. Interacts (via the SNAG domain) with RCOR1. Interacts with SORBS1. Interacts (via the N-terminal region) with CCND1 (via cyclin N-terminal domain); the interaction competes with the binding of CCND1 to CDK4 during cell cycle progression and increases its transcriptional repressor activity. Interacts with HDAC3; the interaction increases its transcriptional repressor activity. As to expression, expressed in pancreatic duct cells. Expressed in several tumor cell lines of neuroendocrine origin including pheochromocytoma, medullary thyroid carcinoma, insulinoma, medulloblastoma, retinoblastoma, pheochromacytoma, medullary thyroid carcinoma and small cell lung carcinoma.

It is found in the nucleus. Sequence-specific DNA-binding transcriptional regulator that plays a key role in neurogenesis and neuroendocrine cell differentiation during embryonic and/or fetal development. Binds to the consensus sequence 5'-[TG][TC][TC][TT][GA]GGG[CG]A-3' in target promoters. Acts as a transcriptional repressor of NEUROD1 and INS expression via its interaction with cyclin CCND1 in a cell cycle-independent manner. Negatively regulates skeletal muscle-specific gene expression in endocrine cells of the pituitary by inhibiting the Notch signaling pathway. Represses target gene transcription by recruiting chromatin-modifying factors, such as HDAC1, HDAC2, HDAC3, KDM1A and RCOR1 histone deacetylases. Binds to its own promoter, suggesting autoregulation as a self-control feedback mechanism. Competes with histone H3 for the same binding site on the histone demethylase complex formed by KDM1A and RCOR1, and thereby inhibits demethylation of histone H3 at 'Lys-4'. Promotes the generation and expansion of neuronal basal progenitor cells in the developing neocortex. Involved in the differentiation of endocrine cells of the developing anterior pituitary gland, of the pancreas and intestine, and of sympatho-adrenal cells in the peripheral nervous system. Promotes cell cycle signaling arrest and inhibition of cellular proliferation. The polypeptide is Insulinoma-associated protein 1 (INSM1) (Homo sapiens (Human)).